Here is a 218-residue protein sequence, read N- to C-terminus: Octanoyltransferase (218 aa).

The 187-residue stretch at 32–218 (GEAAEAIWLL…LRTFPQHFPD (187 aa)) folds into the BPL/LPL catalytic domain. Substrate contacts are provided by residues 71–78 (RGGQYTYH), 151–153 (AIG), and 164–166 (GLS). Catalysis depends on Cys-182, which acts as the Acyl-thioester intermediate.

This sequence belongs to the LipB family.

It localises to the cytoplasm. It catalyses the reaction octanoyl-[ACP] + L-lysyl-[protein] = N(6)-octanoyl-L-lysyl-[protein] + holo-[ACP] + H(+). It participates in protein modification; protein lipoylation via endogenous pathway; protein N(6)-(lipoyl)lysine from octanoyl-[acyl-carrier-protein]: step 1/2. Functionally, catalyzes the transfer of endogenously produced octanoic acid from octanoyl-acyl-carrier-protein onto the lipoyl domains of lipoate-dependent enzymes. Lipoyl-ACP can also act as a substrate although octanoyl-ACP is likely to be the physiological substrate. In Cereibacter sphaeroides (strain ATCC 17023 / DSM 158 / JCM 6121 / CCUG 31486 / LMG 2827 / NBRC 12203 / NCIMB 8253 / ATH 2.4.1.) (Rhodobacter sphaeroides), this protein is Octanoyltransferase.